Consider the following 196-residue polypeptide: Histone H1.0 (196 aa).

Disordered stretches follow at residues 1-29 (MTENSAAAPAGKPKRSKASKKATDHPKYS) and 78-196 (SGTL…GRKK). Residues 24-97 (DHPKYSDMIL…GASGSFRLAK (74 aa)) form the H15 domain. Residues 104–196 (PAKKPKKEIK…ASPKKSGRKK (93 aa)) show a composition bias toward basic residues.

This sequence belongs to the histone H1/H5 family.

The protein localises to the nucleus. The protein resides in the chromosome. Functionally, histones H1 are necessary for the condensation of nucleosome chains into higher-order structures. The histones H1.0 are found in cells that are in terminal stages of differentiation or that have low rates of cell division. The chain is Histone H1.0 (h1-0) from Xenopus tropicalis (Western clawed frog).